The sequence spans 644 residues: (E2-independent) E3 ubiquitin-conjugating enzyme FATS (644 aa).

The required for interaction with p53/TP53 stretch occupies residues 1-67 (MISPVVISRL…LGILTPSDDQ (67 aa)). 4 disordered regions span residues 62–83 (TPSDDQGLETEPLSTGDNLGKG), 305–349 (LGSG…SSHT), 367–413 (VLSG…SILS), and 475–507 (NEDPTVTPEPSPATPSPSTPEGAQSSDPSEDSY). The interval 67–175 (QGLETEPLST…RLSARQDYWV (109 aa)) is required for interaction with HDAC1. The segment covering 398-410 (EGDSSPSSDGQPS) has biased composition (low complexity). Residues 481–492 (TPEPSPATPSPS) are compositionally biased toward pro residues. Positions 516–644 (TLQEALEVHR…LDQLLQRNAV (129 aa)) are ALMS motif. Residues 598–629 (KRIYNNLPEVKKKKEEQKKRMILQSNRLRAEV) adopt a coiled-coil conformation.

In terms of assembly, interacts with HDAC1; the interaction prevents binding of HDAC1 to CDKN1A/p21 and facilitates the acetylation and stabilization of CDKN1A/p21. Interacts with p53/TP53; the interaction inhibits binding of p53/TP53 and MDM2. In terms of tissue distribution, highly expressed in testis. Weak expression found in brain, lung, heart, ovary, thymus, spleen and kidney.

It is found in the cytoplasm. The protein resides in the cytoskeleton. Its subcellular location is the microtubule organizing center. The protein localises to the centrosome. In terms of biological role, tumor suppressor that is required to sustain G2/M checkpoint after DNA damage. Acts as a p53/TP53 activator by inhibiting MDM2 binding to p53/TP53 and stimulating non-proteolytic polyubiquitination of p53/TP53. Exhibits ubiquitin ligase (E3) activity and assemble ubiquitin polymers through 'Lys-11'- (K11-), 'Lys-29'- (K29-) and 'Lys-63'- (K63)-linkages, independently of the ubiquitin-conjugating enzyme (E2). Promotes p53/TP53-dependent transcription of CDKN1A/p21, leading to robust checkpoint response. Mediates CDKN1A/p21 protein stability in a ubiquitin-independent manner. Interacts with HDAC1 and prevents binding of HDAC1 to CDKN1A/p21 and facilitates the acetylation and stabilization of CDKN1A/p21. May have a role in the assembly of primary cilia. The chain is (E2-independent) E3 ubiquitin-conjugating enzyme FATS from Mus musculus (Mouse).